The chain runs to 74 residues: Tau-AnmTx Ueq 12-1 (74 aa).

An N-terminal signal peptide occupies residues 1-18; it reads MCLLMLVLGAMYVQGWHS. The propeptide at 19–27 is removed in mature form; it reads AGFGKRTLK. 5 cysteine pairs are disulfide-bonded: cysteine 30–cysteine 37, cysteine 40–cysteine 71, cysteine 46–cysteine 64, cysteine 51–cysteine 72, and cysteine 58–cysteine 73.

The protein belongs to the Cnidaria small cysteine-rich protein (SCRiP) family. In terms of tissue distribution, detected in mucus secreted from ectoderm.

The protein resides in the secreted. Its function is as follows. Potentiates activation of mammalian TRPA1, a non-selective cation channel involved in perception of pain, in vitro yet has an analgesic and anti-inflammatory effect in vivo. Has antibacterial activity against C.glutamicum (MIC=50 uM) and, to a lesser extent, against S.aureus but not against P.aeruginosa or E.coli. This Urticina eques (Sea anemone) protein is Tau-AnmTx Ueq 12-1.